We begin with the raw amino-acid sequence, 205 residues long: Probable calcium-binding protein CML41 (205 aa).

Residues 26–55 (SFQNRRRSPKSNSSSTLNSPRSNSDDNNNI) are disordered. A compositionally biased stretch (low complexity) spans 35–54 (KSNSSSTLNSPRSNSDDNNN). 4 EF-hand domains span residues 60–95 (ASKEELRQVFSHFDSDGDGKISAFELRHYFGSVGEY), 96–131 (ISHEAAQEAINEVDTDADGSLGFEDFVGLMTRRDLY), 137–173 (DGDGELKTAFEMFEVEKGSGCITPKGLQKMLVKLGES), and 174–205 (RTYGECEAMIKFYDIDGNGILDFHEFRQMMTV). Positions 73, 75, 77, 79, 84, 109, 111, 113, 115, and 120 each coordinate Ca(2+). Residues Asp-187, Asp-189, Asn-191, and Glu-198 each coordinate Ca(2+).

Its function is as follows. Potential calcium sensor. This chain is Probable calcium-binding protein CML41 (CML41), found in Arabidopsis thaliana (Mouse-ear cress).